Reading from the N-terminus, the 389-residue chain is 26S proteasome regulatory subunit 10B (389 aa).

The residue at position 72 (lysine 72) is an N6-acetyllysine. ATP is bound at residue 174-181 (GPPGTGKT). Position 206 is an N6-acetyllysine (lysine 206). A Phosphoserine modification is found at serine 244.

The protein belongs to the AAA ATPase family. Component of the 19S proteasome regulatory particle complex. The 26S proteasome consists of a 20S core particle (CP) and two 19S regulatory subunits (RP). The regulatory particle is made of a lid composed of 9 subunits, a base containing 6 ATPases including PSMC6 and few additional components. Interacts with PAAF1.

It is found in the cytoplasm. It localises to the nucleus. In terms of biological role, component of the 26S proteasome, a multiprotein complex involved in the ATP-dependent degradation of ubiquitinated proteins. This complex plays a key role in the maintenance of protein homeostasis by removing misfolded or damaged proteins, which could impair cellular functions, and by removing proteins whose functions are no longer required. Therefore, the proteasome participates in numerous cellular processes, including cell cycle progression, apoptosis, or DNA damage repair. PSMC6 belongs to the heterohexameric ring of AAA (ATPases associated with diverse cellular activities) proteins that unfolds ubiquitinated target proteins that are concurrently translocated into a proteolytic chamber and degraded into peptides. This Homo sapiens (Human) protein is 26S proteasome regulatory subunit 10B (PSMC6).